The primary structure comprises 207 residues: Large ribosomal subunit protein uL4 (207 aa).

The protein belongs to the universal ribosomal protein uL4 family. In terms of assembly, part of the 50S ribosomal subunit.

In terms of biological role, one of the primary rRNA binding proteins, this protein initially binds near the 5'-end of the 23S rRNA. It is important during the early stages of 50S assembly. It makes multiple contacts with different domains of the 23S rRNA in the assembled 50S subunit and ribosome. Forms part of the polypeptide exit tunnel. The polypeptide is Large ribosomal subunit protein uL4 (Rickettsia africae (strain ESF-5)).